The sequence spans 208 residues: Small ribosomal subunit protein eS8 (208 aa).

The disordered stretch occupies residues 1-23 (MGISRDSAHKRRATGGKRKSLRK). The span at 8–23 (AHKRRATGGKRKSLRK) shows a compositional bias: basic residues.

The protein belongs to the eukaryotic ribosomal protein eS8 family. As to quaternary structure, component of the small ribosomal subunit. Identified in a IGF2BP1-dependent mRNP granule complex containing untranslated mRNAs. Part of the small subunit (SSU) processome, composed of more than 70 proteins and the RNA chaperone small nucleolar RNA (snoRNA) U3.

The protein localises to the cytoplasm. Its subcellular location is the membrane. The protein resides in the nucleus. It localises to the nucleolus. Functionally, component of the small ribosomal subunit. The ribosome is a large ribonucleoprotein complex responsible for the synthesis of proteins in the cell. Part of the small subunit (SSU) processome, first precursor of the small eukaryotic ribosomal subunit. During the assembly of the SSU processome in the nucleolus, many ribosome biogenesis factors, an RNA chaperone and ribosomal proteins associate with the nascent pre-rRNA and work in concert to generate RNA folding, modifications, rearrangements and cleavage as well as targeted degradation of pre-ribosomal RNA by the RNA exosome. In Drosophila melanogaster (Fruit fly), this protein is Small ribosomal subunit protein eS8 (RpS8).